Reading from the N-terminus, the 231-residue chain is 7-cyano-7-deazaguanine synthase (231 aa).

Position 8–18 (F8–L18) interacts with ATP. 4 residues coordinate Zn(2+): C188, C197, C200, and C203.

This sequence belongs to the QueC family. Zn(2+) is required as a cofactor.

The enzyme catalyses 7-carboxy-7-deazaguanine + NH4(+) + ATP = 7-cyano-7-deazaguanine + ADP + phosphate + H2O + H(+). Its pathway is purine metabolism; 7-cyano-7-deazaguanine biosynthesis. Its function is as follows. Catalyzes the ATP-dependent conversion of 7-carboxy-7-deazaguanine (CDG) to 7-cyano-7-deazaguanine (preQ(0)). The protein is 7-cyano-7-deazaguanine synthase of Salmonella paratyphi A (strain ATCC 9150 / SARB42).